Reading from the N-terminus, the 310-residue chain is MKRIQIIDSHTGGEPTRLVVSGFPSLGRGTMAERRDVLAREHDRYRTACILEPRGSDVMVGALLCDPVAPDAAAGVIFFNNSGYLGMCGHGTIGVVRTLHHMGRIEPGVHRIETPVGTVEATLHDDLSVSVRNVPAYRHAQGVVLDVPGYGPVKGDIAWGGNWFFLISDHGQRVAGDNVAALTAYASAVREGLERAGITGANGGEIDHIELFADDPEHDSRSFVLCPGLAYDRSPCGTGTSAKLACLAADGKLAPGVVWRQASVIGSVFHASYELADGGIVPTIRGSAHLSAEATLLIDEDDPFGWGIGS.

Cys88 functions as the Proton acceptor in the catalytic mechanism. Substrate contacts are provided by residues 89–90, His208, and Asp232; that span reads GH. Cys236 acts as the Proton donor in catalysis. 237 to 238 contributes to the substrate binding site; sequence GT.

Belongs to the proline racemase family. In terms of assembly, homodimer.

It catalyses the reaction trans-4-hydroxy-L-proline = cis-4-hydroxy-D-proline. Allows intracellular utilization of 4-hydroxyproline, one of the major constituents of host collagen, by converting 4-hydroxy-L-proline to 4-hydroxy-D-proline, which can be further metabolized by intracellular 4-hydroxy-D-proline oxidases. In Burkholderia cenocepacia (strain HI2424), this protein is 4-hydroxyproline epimerase.